Here is a 193-residue protein sequence, read N- to C-terminus: Activity-regulated cytoskeleton associated protein 2 (193 aa).

This sequence belongs to the ARC/ARG3.1 family. Homooligomer; homooligomerizes into virion-like capsids.

It localises to the extracellular vesicle membrane. In terms of biological role, self-assembles into virion-like capsids that encapsulate RNAs and mediate intercellular RNA transfer. Arc2 protein is released from cells in extracellular vesicles that mediate the transfer of mRNA into neighboring cells. The sequence is that of Activity-regulated cytoskeleton associated protein 2 from Drosophila melanogaster (Fruit fly).